The chain runs to 108 residues: Putative bolA-like protein K11H12.1 (108 aa).

A disordered region spans residues 89 to 108 (SKWDGQKQEDSPTCRGGFGK).

The protein belongs to the BolA/IbaG family.

In Caenorhabditis elegans, this protein is Putative bolA-like protein K11H12.1.